Here is a 324-residue protein sequence, read N- to C-terminus: Beta-ketoacyl-[acyl-carrier-protein] synthase III (324 aa).

Active-site residues include Cys112 and His251. Residues 252–256 form an ACP-binding region; it reads QANLR. Asn281 is an active-site residue.

The protein belongs to the thiolase-like superfamily. FabH family. In terms of assembly, homodimer.

Its subcellular location is the cytoplasm. The enzyme catalyses malonyl-[ACP] + acetyl-CoA + H(+) = 3-oxobutanoyl-[ACP] + CO2 + CoA. The protein operates within lipid metabolism; fatty acid biosynthesis. Its function is as follows. Catalyzes the condensation reaction of fatty acid synthesis by the addition to an acyl acceptor of two carbons from malonyl-ACP. Catalyzes the first condensation reaction which initiates fatty acid synthesis and may therefore play a role in governing the total rate of fatty acid production. Possesses both acetoacetyl-ACP synthase and acetyl transacylase activities. Its substrate specificity determines the biosynthesis of branched-chain and/or straight-chain of fatty acids. This is Beta-ketoacyl-[acyl-carrier-protein] synthase III from Clostridium perfringens (strain SM101 / Type A).